Here is a 595-residue protein sequence, read N- to C-terminus: Glycine betaine transporter BetP (595 aa).

The Cytoplasmic segment spans residues 1 to 59 (MTTSDPNPKPIVEDAQPEQITATEELAGLLENPTNLEGKLADAEEEIILEGEDTQASLN). The helical transmembrane segment at 60-80 (WSVIVPALVIVLATVVWGIGF) threads the bilayer. Residues 81-98 (KDSFTNFASSALSAVVDN) lie on the Periplasmic side of the membrane. A helical transmembrane segment spans residues 99–119 (LGWAFILFGTVFVFFIVVIAA). At 120 to 137 (SKFGTIRLGRIDEAPEFR) the chain is on the cytoplasmic side. The helical transmembrane segment at 138-158 (TVSWISMMFAAGMGIGLMFYG) threads the bilayer. Na(+)-binding residues include Ala-147, Ala-148, and Met-150. 152–153 (IG) contacts glycine betaine. Residues 159–185 (TTEPLTFYRNGVPGHDEHNVGVAMSTT) lie on the Periplasmic side of the membrane. The chain crosses the membrane as a helical span at residues 186 to 206 (MFHWTLHPWAIYAIVGLAIAY). At 207-236 (STFRVGRKQLLSSAFVPLIGEKGAEGWLGK) the chain is on the cytoplasmic side. Residues 237 to 257 (LIDILAIIATVFGTACSLGLG) form a helical membrane-spanning segment. Glycine betaine is bound at residue Ser-253. Residues 258 to 276 (ALQIGAGLSAANIIEDPSD) lie on the Periplasmic side of the membrane. The chain crosses the membrane as a helical span at residues 277 to 296 (WTIVGIVSVLTLAFIFSAIS). Residues 297 to 299 (GVG) are Cytoplasmic-facing. The helical transmembrane segment at 300 to 323 (KGIQYLSNANMVLAALLAIFVFVV) threads the bilayer. Residues Ser-306 and Met-310 each coordinate Na(+). Over 324–365 (GPTVSILNLLPGSIGNYLSNFFQMAGRTAMSADGTAGEWLGS) the chain is Periplasmic. Residues 366-386 (WTIFYWAWWISWSPFVGMFLA) form a helical membrane-spanning segment. Residue 373-377 (WWISW) participates in glycine betaine binding. The Cytoplasmic portion of the chain corresponds to 387–396 (RISRGRSIRE). A helical transmembrane segment spans residues 397–417 (FILGVLLVPAGVSTVWFSIFG). The Periplasmic portion of the chain corresponds to 418-451 (GTAIVFEQNGESIWGDGAAEEQLFGLLHALPGGQ). Residues 452–476 (IMGIIAMILLGTFFITSADSASTVM) form a helical membrane-spanning segment. Over 477-489 (GTMSQHGQLEANK) the chain is Cytoplasmic. Residues 490 to 510 (WVTAAWGVATAAIGLTLLLSG) form a helical membrane-spanning segment. The Periplasmic segment spans residues 511-520 (GDNALSNLQN). The helical transmembrane segment at 521 to 541 (VTIVAATPFLFVVIGLMFALV) threads the bilayer. The Cytoplasmic segment spans residues 542-595 (KDLSNDVIYLEYREQQRFNARLARERRVHNEHRKRELAAKRRRERKASGAGKRR). The interval 570–595 (HNEHRKRELAAKRRRERKASGAGKRR) is disordered. The span at 581 to 595 (KRRRERKASGAGKRR) shows a compositional bias: basic residues.

It belongs to the BCCT transporter (TC 2.A.15) family. As to quaternary structure, homotrimer. The monomer can accumulate glycine betaine, but trimerization is required to properly respond to osmotic stress.

It is found in the cell inner membrane. With respect to regulation, uptake is activated by hyperosmotic stress. Osmoresponsive activation is triggered by a change in the internal K(+) concentration. In addition, shows a pronounced chill stimulation, at temperatures around 10 degrees Celsius. Chill activation may be influenced by the membrane lipid composition. Uptake is completely abolished by the uncoupler CCCP, and to a different extent by the ionophores valinomycin and nigericin. Functionally, involved in response to osmotic stress. High-affinity glycine betaine-specific uptake system, which couples the uptake of glycine betaine to the symport of two Na(+) ions. Transport is driven both by the Na(+) gradient and by the electrical potential. In addition, functions both as an osmosensor and as an osmoregulator that transduces signal to the catalytic part of the carrier protein, which adapts its activity to the extent of osmotic stress. The sequence is that of Glycine betaine transporter BetP from Corynebacterium glutamicum (strain ATCC 13032 / DSM 20300 / JCM 1318 / BCRC 11384 / CCUG 27702 / LMG 3730 / NBRC 12168 / NCIMB 10025 / NRRL B-2784 / 534).